The following is a 63-amino-acid chain: Adipokinetic prohormone type 1 (63 aa).

The first 22 residues, 1-22 (MVQRCLVVALLVVVVAAALCSA), serve as a signal peptide directing secretion. Gln23 is subject to Pyrrolidone carboxylic acid. The residue at position 32 (Thr32) is a Threonine amide.

The protein belongs to the AKH/HRTH/RPCH family. As to quaternary structure, adipokinetic hormone precursor-related peptide (APRP) can form three type of disulfide-bond dimers: p1 (alpha-alpha), p2 (alpha-beta), and p3 (beta-beta).

It localises to the secreted. Functionally, this hormone, released from cells in the corpora cardiaca, causes release of diglycerides from the fat body and stimulation of muscles to use these diglycerides as an energy source during energy-demanding processes. This is Adipokinetic prohormone type 1 from Schistocerca nitens (Vagrant locust).